Consider the following 173-residue polypeptide: Crossover junction endodeoxyribonuclease RuvC (173 aa).

Residues D8, E67, and D139 contribute to the active site. Positions 8, 67, and 139 each coordinate Mg(2+).

It belongs to the RuvC family. Homodimer which binds Holliday junction (HJ) DNA. The HJ becomes 2-fold symmetrical on binding to RuvC with unstacked arms; it has a different conformation from HJ DNA in complex with RuvA. In the full resolvosome a probable DNA-RuvA(4)-RuvB(12)-RuvC(2) complex forms which resolves the HJ. Requires Mg(2+) as cofactor.

It localises to the cytoplasm. It carries out the reaction Endonucleolytic cleavage at a junction such as a reciprocal single-stranded crossover between two homologous DNA duplexes (Holliday junction).. Its function is as follows. The RuvA-RuvB-RuvC complex processes Holliday junction (HJ) DNA during genetic recombination and DNA repair. Endonuclease that resolves HJ intermediates. Cleaves cruciform DNA by making single-stranded nicks across the HJ at symmetrical positions within the homologous arms, yielding a 5'-phosphate and a 3'-hydroxyl group; requires a central core of homology in the junction. The consensus cleavage sequence is 5'-(A/T)TT(C/G)-3'. Cleavage occurs on the 3'-side of the TT dinucleotide at the point of strand exchange. HJ branch migration catalyzed by RuvA-RuvB allows RuvC to scan DNA until it finds its consensus sequence, where it cleaves and resolves the cruciform DNA. The sequence is that of Crossover junction endodeoxyribonuclease RuvC from Aeromonas salmonicida (strain A449).